Reading from the N-terminus, the 251-residue chain is Flap endonuclease Xni (251 aa).

Asp-104 serves as a coordination point for Mg(2+). A 5'-3' exonuclease domain is found at 160–249 (VQPQQLPDYW…IDGNLQQLRL (90 aa)). Residues Leu-171, Ala-172, Pro-180, Val-182, and Ile-185 each contribute to the K(+) site. The interaction with DNA stretch occupies residues 184-189 (GIGPKS).

It belongs to the Xni family. Mg(2+) is required as a cofactor. Requires K(+) as cofactor.

In terms of biological role, has flap endonuclease activity. During DNA replication, flap endonucleases cleave the 5'-overhanging flap structure that is generated by displacement synthesis when DNA polymerase encounters the 5'-end of a downstream Okazaki fragment. The polypeptide is Flap endonuclease Xni (Escherichia coli O6:K15:H31 (strain 536 / UPEC)).